The chain runs to 250 residues: Probable dihydroorotate dehydrogenase B (NAD(+)), electron transfer subunit (250 aa).

Residues 1-89 (MNRITVDQVR…RGPYGNGFQI (89 aa)) form the FAD-binding FR-type domain. Positions 200, 205, 208, and 216 each coordinate [2Fe-2S] cluster.

It belongs to the PyrK family. Heterotetramer of 2 PyrK and 2 PyrD type B subunits. [2Fe-2S] cluster is required as a cofactor. It depends on FAD as a cofactor.

The protein operates within pyrimidine metabolism; UMP biosynthesis via de novo pathway; orotate from (S)-dihydroorotate (NAD(+) route): step 1/1. Functionally, responsible for channeling the electrons from the oxidation of dihydroorotate from the FMN redox center in the PyrD type B subunit to the ultimate electron acceptor NAD(+). This Thermoplasma acidophilum (strain ATCC 25905 / DSM 1728 / JCM 9062 / NBRC 15155 / AMRC-C165) protein is Probable dihydroorotate dehydrogenase B (NAD(+)), electron transfer subunit.